A 1374-amino-acid polypeptide reads, in one-letter code: DNA-directed RNA polymerase subunit beta (1374 aa).

This sequence belongs to the RNA polymerase beta chain family. As to quaternary structure, the RNAP catalytic core consists of 2 alpha, 1 beta, 1 beta' and 1 omega subunit. When a sigma factor is associated with the core the holoenzyme is formed, which can initiate transcription.

The catalysed reaction is RNA(n) + a ribonucleoside 5'-triphosphate = RNA(n+1) + diphosphate. Its function is as follows. DNA-dependent RNA polymerase catalyzes the transcription of DNA into RNA using the four ribonucleoside triphosphates as substrates. In Methylobacterium radiotolerans (strain ATCC 27329 / DSM 1819 / JCM 2831 / NBRC 15690 / NCIMB 10815 / 0-1), this protein is DNA-directed RNA polymerase subunit beta.